The primary structure comprises 965 residues: Glycine dehydrogenase (decarboxylating) (965 aa).

Lys-711 is modified (N6-(pyridoxal phosphate)lysine).

Belongs to the GcvP family. As to quaternary structure, the glycine cleavage system is composed of four proteins: P, T, L and H. Pyridoxal 5'-phosphate serves as cofactor.

It carries out the reaction N(6)-[(R)-lipoyl]-L-lysyl-[glycine-cleavage complex H protein] + glycine + H(+) = N(6)-[(R)-S(8)-aminomethyldihydrolipoyl]-L-lysyl-[glycine-cleavage complex H protein] + CO2. Functionally, the glycine cleavage system catalyzes the degradation of glycine. The P protein binds the alpha-amino group of glycine through its pyridoxal phosphate cofactor; CO(2) is released and the remaining methylamine moiety is then transferred to the lipoamide cofactor of the H protein. This Psychrobacter arcticus (strain DSM 17307 / VKM B-2377 / 273-4) protein is Glycine dehydrogenase (decarboxylating).